The primary structure comprises 358 residues: MADNKVNLSINGQSKVPPGFRFHPTEEELLHYYLRKKVNSQKIDLDVIREVDLNKLEPWDIQEECRIGSTPQNDWYFFSHKDKKYPTGTRTNRATVAGFWKATGRDKIICSCVRRIGLRKTLVFYKGRAPHGQKSDWIMHEYRLDDTPMSNGYADVVTEDPMSYNEEGWVVCRVFRKKNYQKIDDCPKITLSSLPDDTEEEKGPTFHNTQNVTGLDHVLLYMDRTGSNICMPESQTTTQHQDDVLFMQLPSLETPKSESPVDQSFLTPSKLDFSPVQEKITERPVCSNWASLDRLVAWQLNNGHHNPCHRKSFDEEEENGDTMMQRWDLHWNNDDNVDLWSSFTESSSSLDPLLHLSV.

The region spanning 16 to 177 is the NAC domain; sequence VPPGFRFHPT…GWVVCRVFRK (162 aa). The DNA-binding element occupies 116–183; that stretch reads IGLRKTLVFY…VFRKKNYQKI (68 aa).

In terms of tissue distribution, stems and roots, specifically in interfascicular fibers (sclerenchyma), cells differentiating into vascular vessels (cambium), and xylem.

The protein localises to the nucleus. Its function is as follows. Transcriptional activator of genes involved in biosynthesis of secondary walls. Together with NST1, required for the secondary cell wall thickening and lignification of sclerenchymatous fibers and secondary xylem vessels (tracheary elements). Seems to repress the secondary cell wall thickening of xylary fibers. May also regulate the secondary cell wall lignification of other tissues. Binds to and activates the promoter of MYB46. The protein is NAC domain-containing protein 12 of Arabidopsis thaliana (Mouse-ear cress).